A 399-amino-acid polypeptide reads, in one-letter code: O-antigen polymerase (399 aa).

10 helical membrane-spanning segments follow: residues 4 to 24, 37 to 57, 64 to 84, 97 to 117, 151 to 171, 185 to 205, 222 to 242, 309 to 329, 353 to 373, and 374 to 394; these read FPPG…LVLV, LVFT…LTIF, AIMG…LVIL, IVCY…IDVL, GGFS…LLCM, IISF…AILV, FCGI…TNIF, FFWI…IYLA, LYFL…APSS, and STFS…KLTN.

It is found in the cell inner membrane. The catalysed reaction is n lipid-linked O-antigen repeat units = a lipid-linked O antigen + (n-1) polyisoprenyl diphosphate.. It functions in the pathway bacterial outer membrane biogenesis; LPS O-antigen biosynthesis. Its function is as follows. Polymerase involved in the biosynthesis of the lipopolysaccharide (LPS). Catalyzes the polymerization of the O-antigen repeat units on the periplasmic face of the inner membrane, leading to the formation of the lipid-linked O-antigen molecule. The chain is O-antigen polymerase from Salmonella muenchen.